The following is a 70-amino-acid chain: Large ribosomal subunit protein bL31 (70 aa).

Zn(2+) is bound by residues Cys-16, Cys-18, Cys-37, and Cys-40. The interval 48 to 70 (QRQASSGGRVDKFNKRFGALGSK) is disordered.

The protein belongs to the bacterial ribosomal protein bL31 family. Type A subfamily. In terms of assembly, part of the 50S ribosomal subunit. It depends on Zn(2+) as a cofactor.

Functionally, binds the 23S rRNA. This is Large ribosomal subunit protein bL31 from Photobacterium profundum (strain SS9).